The following is a 1043-amino-acid chain: Beta-klotho (1043 aa).

Residues 1–994 (MKTGCAAGSP…ICSFLVEKKP (994 aa)) lie on the Extracellular side of the membrane. 2 glycosyl hydrolase-1 regions span residues 77–506 (LYDT…DNGF) and 515–965 (MKGR…SSGL). Residues Asn-84, Asn-122, Asn-161, Asn-211, Asn-262, Asn-308, Asn-389, Asn-552, Asn-609, Asn-700, Asn-704, and Asn-837 are each glycosylated (N-linked (GlcNAc...) asparagine). The helical transmembrane segment at 995-1015 (LIFFGCCFISTLAVLLSITVF) threads the bilayer. The Cytoplasmic segment spans residues 1016-1043 (HHQKRRKFQKARNLQNIPLKKGHSRVFS).

The protein belongs to the glycosyl hydrolase 1 family. Klotho subfamily. In terms of assembly, interacts with FGF19; this interaction is direct. Interacts (via C-terminus) with FGF21; this interaction is direct. Interacts with FGFR1 and FGFR4. In terms of tissue distribution, present in liver, muscle and white adipose tissue, but not in kidney (at protein level). Expressed in liver and pancreas, and at lower levels in skin, stomach, skeletal muscle, small intestine and lung.

The protein localises to the cell membrane. Contributes to the transcriptional repression of cholesterol 7-alpha-hydroxylase (CYP7A1), the rate-limiting enzyme in bile acid synthesis. Probably inactive as a glycosidase. Increases the ability of FGFR1 and FGFR4 to bind FGF21. The sequence is that of Beta-klotho (Klb) from Mus musculus (Mouse).